Reading from the N-terminus, the 781-residue chain is Putative amine oxidase [copper-containing] (781 aa).

The first 34 residues, 1–34 (MSLPKTANGMDKLKLCYLLLFYLGSSSLTEVSGA), serve as a signal peptide directing secretion. A disulfide bridge links Cys199 with Cys203. Residue 385-395 (FFDSSYMIGMN) coordinates substrate. Catalysis depends on Asp387, which acts as the Proton acceptor. A disulfide bridge connects residues Cys405 and Cys432. 472–477 (IANYDY) contributes to the substrate binding site. Tyr475 serves as the catalytic Schiff-base intermediate with substrate; via topaquinone. The residue at position 475 (Tyr475) is a 2',4',5'-topaquinone. His525 and His527 together coordinate Cu cation. 8 residues coordinate Ca(2+): Asp534, Asp536, Glu579, Phe671, Asp674, Glu676, Asp682, and Leu683. Mn(2+) contacts are provided by Asp534 and Asp536. Asp682 lines the Mn(2+) pocket. Position 693 (His693) interacts with Cu cation.

The protein belongs to the copper/topaquinone oxidase family. In terms of assembly, homodimer. Cu cation serves as cofactor. It depends on Ca(2+) as a cofactor. The cofactor is L-topaquinone. Mn(2+) is required as a cofactor. Topaquinone (TPQ) is generated by copper-dependent autoxidation of a specific tyrosyl residue. Prismatic layer of shell (at protein level). Expressed primarily in the mantle with highest level in the mantle edge and lower level in the mantle pallium.

The protein resides in the secreted. In Margaritifera margaritifera (Freshwater pearl mussel), this protein is Putative amine oxidase [copper-containing].